A 540-amino-acid polypeptide reads, in one-letter code: H(+)/hexose cotransporter 2 (540 aa).

Topologically, residues 1–29 (MAGGGPVASTTTNRASQYGYARGGLNWYI) are cytoplasmic. A helical transmembrane segment spans residues 30–50 (FIVALTAGSGGLLFGYDIGVT). The Extracellular segment spans residues 51–90 (GGVTSMPEFLQKFFPSIYDRTQQPSDSKDPYCTYDDQKLQ). Residues 91 to 111 (LFTSSFFLAGMFVSFFAGSVV) traverse the membrane as a helical segment. Topologically, residues 112-124 (RRWGRKPTMLIAS) are cytoplasmic. Residues 125–135 (VLFLAGAGLNA) traverse the membrane as a helical segment. Residues 136 to 147 (GAQDLAMLVIGR) are Extracellular-facing. A helical membrane pass occupies residues 148-168 (VLLGFGVGGGNNAVPLYLSEC). Residues 169–176 (APPKYRGG) are Cytoplasmic-facing. The helical transmembrane segment at 177–197 (LNMMFQLAVTIGIIVAQLVNY) threads the bilayer. Over 198–207 (GTQTMNNGWR) the chain is Extracellular. The chain crosses the membrane as a helical span at residues 208–228 (LSLGLAGVPAIILLIGSLLLP). Residues 229-296 (ETPNSLIERG…YSPMLIVTSL (68 aa)) lie on the Cytoplasmic side of the membrane. The chain crosses the membrane as a helical span at residues 297 to 317 (IAMLQQLTGINAIMFYVPVLF). At 318-326 (SSFGTARHA) the chain is on the extracellular side. Residues 327–337 (ALLNTVIIGAV) form a helical membrane-spanning segment. At 338-355 (NVAATFVSIFSVDKFGRR) the chain is on the cytoplasmic side. Residues 356–376 (GLFLEGGIQMFIGQVVTAAVL) traverse the membrane as a helical segment. Topologically, residues 377–396 (GVELNKYGTNLPSSTAAGVL) are extracellular. The chain crosses the membrane as a helical span at residues 397 to 417 (VVICVYVAAFAWSWGPLGWLV). Topologically, residues 418-435 (PSEIQTLETRGAGMSMAV) are cytoplasmic. The chain crosses the membrane as a helical span at residues 436-456 (IVNFLFSFVIGQAFLSMMCAM). Residues 457 to 458 (RW) are Extracellular-facing. Residues 459–479 (GVFLFFAGWVVIMTFFVYFCL) traverse the membrane as a helical segment. Residues 480 to 540 (PETKGVPVET…SEDGKPASDQ (61 aa)) lie on the Cytoplasmic side of the membrane.

This sequence belongs to the major facilitator superfamily. Sugar transporter (TC 2.A.1.1) family.

The protein localises to the membrane. In terms of biological role, active uptake of galactose. This is H(+)/hexose cotransporter 2 (HUP2) from Parachlorella kessleri (Green alga).